Reading from the N-terminus, the 476-residue chain is Doublecortin domain-containing protein 2 (476 aa).

Doublecortin domains lie at 17 to 100 (KSVL…LNYL) and 139 to 221 (CTIF…LPYS). A disordered region spans residues 234 to 476 (FGQKASSLPP…QQNKDYAAVA (243 aa)). Polar residues predominate over residues 261–272 (STVGSSDNSSPQ). S270 carries the post-translational modification Phosphoserine. The segment covering 279–289 (KKEDVNSEKLT) has biased composition (basic and acidic residues). Positions 296–306 (KLKNSQETIPN) are enriched in polar residues. The segment covering 354 to 366 (EKANKDAEQKEDF) has biased composition (basic and acidic residues). Positions 415-426 (ELQQVNNELQLV) are enriched in low complexity. A compositionally biased stretch (basic and acidic residues) spans 446–455 (DPQRPPRPEV).

In terms of assembly, interacts with DVL1, DVL2 and DVL3. In terms of tissue distribution, ubiquitously expressed. In brain, highly expressed in the entorhinal cortex, inferior temporal cortex, medial temporal cortex, hypothalamus, amygdala and hippocampus. Expressed in liver by cholangiocytes, the epithelial cells of the bile ducts (at protein level).

Its subcellular location is the cell projection. The protein resides in the cilium. The protein localises to the cytoplasm. It is found in the cytoskeleton. It localises to the cilium axoneme. Its subcellular location is the kinocilium. Protein that plays a role in the inhibition of canonical Wnt signaling pathway. May be involved in neuronal migration during development of the cerebral neocortex. Involved in the control of ciliogenesis and ciliary length. In Homo sapiens (Human), this protein is Doublecortin domain-containing protein 2 (DCDC2).